Consider the following 150-residue polypeptide: 16 kDa phloem protein 1 (150 aa).

A C2 domain is found at 1-108 (MGMGMMEVHL…LAEGVRKGKS (108 aa)). Ca(2+)-binding residues include aspartate 20, aspartate 27, aspartate 78, aspartate 80, and aspartate 86.

The cofactor is Ca(2+). As to expression, sieve elements of leaves, stems, roots and flowers.

Its function is as follows. Binds to both sense and antisense RNA. Interacts with mesophyll plasmodesmata to mediate its own cell-to-cell transport and potentiate RNA trafficking. The polypeptide is 16 kDa phloem protein 1 (PP16-1) (Cucurbita maxima (Pumpkin)).